Consider the following 194-residue polypeptide: Small ribosomal subunit protein uS4c (194 aa).

The 62-residue stretch at 82–143 folds into the S4 RNA-binding domain; the sequence is MRLDNILFRL…KERSKVLIQN (62 aa).

The protein belongs to the universal ribosomal protein uS4 family. As to quaternary structure, part of the 30S ribosomal subunit. Contacts protein S5. The interaction surface between S4 and S5 is involved in control of translational fidelity.

The protein resides in the plastid. It is found in the chloroplast. One of the primary rRNA binding proteins, it binds directly to 16S rRNA where it nucleates assembly of the body of the 30S subunit. Functionally, with S5 and S12 plays an important role in translational accuracy. The protein is Small ribosomal subunit protein uS4c (rps4) of Trimezia steyermarkii (Steyermark's trimezia).